The sequence spans 127 residues: Large ribosomal subunit protein bL17 (127 aa).

It belongs to the bacterial ribosomal protein bL17 family. As to quaternary structure, part of the 50S ribosomal subunit. Contacts protein L32.

The chain is Large ribosomal subunit protein bL17 from Lactobacillus gasseri (strain ATCC 33323 / DSM 20243 / BCRC 14619 / CIP 102991 / JCM 1131 / KCTC 3163 / NCIMB 11718 / NCTC 13722 / AM63).